The chain runs to 380 residues: Lipid-A-disaccharide synthase (380 aa).

It belongs to the LpxB family.

It carries out the reaction a lipid X + a UDP-2-N,3-O-bis[(3R)-3-hydroxyacyl]-alpha-D-glucosamine = a lipid A disaccharide + UDP + H(+). The protein operates within bacterial outer membrane biogenesis; LPS lipid A biosynthesis. Condensation of UDP-2,3-diacylglucosamine and 2,3-diacylglucosamine-1-phosphate to form lipid A disaccharide, a precursor of lipid A, a phosphorylated glycolipid that anchors the lipopolysaccharide to the outer membrane of the cell. The sequence is that of Lipid-A-disaccharide synthase from Vibrio vulnificus (strain CMCP6).